Here is a 522-residue protein sequence, read N- to C-terminus: Occludin (522 aa).

The interval 1 to 20 (MSSRPLESPPPYRPDEFKPN) is disordered. Topologically, residues 1–66 (MSSRPLESPP…KWTSPPGVIR (66 aa)) are cytoplasmic. The 210-residue stretch at 60-269 (SPPGVIRILS…IIFFAVKTRR (210 aa)) folds into the MARVEL domain. Residues 67–89 (ILSMLIIVMCIAIFACVASTLAW) form a helical membrane-spanning segment. The Extracellular portion of the chain corresponds to 90–135 (DRGYGTSLLGGSVGYPYGGSGFGSYGSGYGYGYGYGYGYGGYTDPR). A helical transmembrane segment spans residues 136–160 (AAKGFMLAMAAFCFIAALVIFVTSV). At 161 to 170 (IRSEMSRTRR) the chain is on the cytoplasmic side. The helical transmembrane segment at 171–195 (YYLSVIIVSAILGIMVFIATIVYIM) threads the bilayer. The Extracellular segment spans residues 196–243 (GVNPTAQSSGSLYGSQIYALCNQFYTPAATGLYVDQYLYHYCVVDPQE). Cys216 and Cys237 are joined by a disulfide. Residues 244 to 265 (AIAIVLGFMIIVAFALIIFFAV) form a helical membrane-spanning segment. Over 266–522 (KTRRKMDRYD…MVGDYDRQKT (257 aa)) the chain is Cytoplasmic. At Ser302 the chain carries Phosphoserine. The residue at position 305 (Thr305) is a Phosphothreonine. A phosphoserine mark is found at Ser313, Ser321, and Ser340. Positions 360-407 (VDDFRQPRYSSGGNFETPSKRAPAKGRAGRSKRTEQDHYETDYTTGGE) are disordered. Residues 367-376 (RYSSGGNFET) are compositionally biased toward polar residues. The residue at position 368 (Tyr368) is a Phosphotyrosine. 2 positions are modified to phosphoserine: Ser369 and Ser370. A compositionally biased stretch (basic residues) spans 381-390 (APAKGRAGRS). Residues 391–400 (KRTEQDHYET) show a composition bias toward basic and acidic residues. 2 positions are modified to phosphotyrosine: Tyr398 and Tyr402. Residues Thr403 and Thr404 each carry the phosphothreonine; by PKC/PRKCH modification. Ser408 carries the post-translational modification Phosphoserine. The 109-residue stretch at 414–522 (EDWIREYPPI…MVGDYDRQKT (109 aa)) folds into the OCEL domain. Residues 426 to 489 (DQQRQLYKRN…EYNRLKQVKG (64 aa)) are a coiled coil. Ser490 carries the phosphoserine modification.

This sequence belongs to the ELL/occludin family. In terms of assembly, interacts with TJP1/ZO1. Interacts with VAPA. Interacts with CLDN1, CLDN6, CLDN9, CLDN11, CLDN12 and CLDN17. Interacts with PLSCR1. Interacts with LSR, ILDR1 and ILDR2. Interacts with TJP2/ZO2. Post-translationally, dephosphorylated by PTPRJ. The tyrosine phosphorylation on Tyr-398 and Tyr-402 reduces its ability to interact with TJP1. Phosphorylation at Ser-490 also attenuates the interaction with TJP1. (Microbial infection) Cleaved by S.pyogenes SpeB protease; leading to its degradation. Degradation by SpeB promotes bacterial translocation across the host epithelial barrier. Localized at tight junctions of both epithelial and endothelial cells. Highly expressed in kidney. Not detected in testis.

It localises to the cell membrane. The protein resides in the cell junction. The protein localises to the tight junction. May play a role in the formation and regulation of the tight junction (TJ) paracellular permeability barrier. It is able to induce adhesion when expressed in cells lacking tight junctions. In terms of biological role, (Microbial infection) Acts as a coreceptor for hepatitis C virus (HCV) in hepatocytes. The polypeptide is Occludin (OCLN) (Homo sapiens (Human)).